The chain runs to 77 residues: Acyl carrier protein (77 aa).

Positions 2–77 (SSIEKRVKEI…DAIDYITEHT (76 aa)) constitute a Carrier domain. At S37 the chain carries O-(pantetheine 4'-phosphoryl)serine.

The protein belongs to the acyl carrier protein (ACP) family. 4'-phosphopantetheine is transferred from CoA to a specific serine of apo-ACP by AcpS. This modification is essential for activity because fatty acids are bound in thioester linkage to the sulfhydryl of the prosthetic group.

It localises to the cytoplasm. It participates in lipid metabolism; fatty acid biosynthesis. Carrier of the growing fatty acid chain in fatty acid biosynthesis. This chain is Acyl carrier protein, found in Geobacter sulfurreducens (strain ATCC 51573 / DSM 12127 / PCA).